A 698-amino-acid polypeptide reads, in one-letter code: Polyribonucleotide nucleotidyltransferase (698 aa).

Residues Asp490 and Asp496 each coordinate Mg(2+). A KH domain is found at Pro557–Ile616. The 69-residue stretch at Gly626–Arg694 folds into the S1 motif domain.

It belongs to the polyribonucleotide nucleotidyltransferase family. Mg(2+) serves as cofactor.

The protein localises to the cytoplasm. It carries out the reaction RNA(n+1) + phosphate = RNA(n) + a ribonucleoside 5'-diphosphate. Functionally, involved in mRNA degradation. Catalyzes the phosphorolysis of single-stranded polyribonucleotides processively in the 3'- to 5'-direction. This chain is Polyribonucleotide nucleotidyltransferase, found in Staphylococcus aureus (strain MSSA476).